The primary structure comprises 225 residues: MADS-box transcription factor 5 (225 aa).

The 61-residue stretch at 1–61 folds into the MADS-box domain; sequence MGRGKVELKR…GRLFEFSTSS (61 aa). Positions 89 to 179 constitute a K-box domain; the sequence is ELSNYQEYLK…KRKIQETSGE (91 aa).

May interact with the K-box of MADS6.

It is found in the nucleus. Probable transcription factor. This Oryza sativa subsp. indica (Rice) protein is MADS-box transcription factor 5 (MADS5).